A 1057-amino-acid chain; its full sequence is Exportin-1 (1057 aa).

One can recognise an Importin N-terminal domain in the interval 36–102 (AQMVLGKFQE…KNYIVSLIIR (67 aa)). 11 HEAT repeats span residues 239–275 (AEPSKLVKLLLHKYFPEPLFRNSTLKCLTEIGNLNLG), 281–321 (AVFI…FIHT), 462–501 (NTQHIMLEKLQTLISGREFTFQRLNTLCWAIGSISGAQNK), 506–544 (RFLVTVIKDLLELCQNKKGKDNKAVIASDIMYIVGQYPR), 551–588 (KFLKTVVNKLFEFMHESHPGVQDMACDTFLKISKQCKR), 596–633 (EESQPFINELLNQLSTTIAHLEQSQIHTFYEAVGYMIA), 739–776 (KETLKLLETFIEKSSDKQVIYSNFLQPLLEAVLGDYRT), 781–818 (TRDPEVLSLMTAIITSLKQLVHPEVPKILEAVFETTLS), 855–892 (QQFKLLIDCVVWAFKHTERNISETGLHILKELIENVSK), 902–925 (KTYLVSLLNDILYILTDSFHKSGF), and 926–965 (ALECDILRMMFQVVENGVVKIPLFDPQQANFPSNSEYVKE).

It belongs to the exportin family. Component of a nuclear export receptor complex.

Its subcellular location is the nucleus. It localises to the cytoplasm. The protein localises to the perinuclear region. In terms of biological role, mediates the nuclear export of cellular proteins (cargos) bearing a leucine-rich nuclear export signal (NES). This Dictyostelium discoideum (Social amoeba) protein is Exportin-1 (xpo1).